Consider the following 369-residue polypeptide: Peptide chain release factor 2 (369 aa).

At Q251 the chain carries N5-methylglutamine.

The protein belongs to the prokaryotic/mitochondrial release factor family. Methylated by PrmC. Methylation increases the termination efficiency of RF2.

The protein localises to the cytoplasm. Peptide chain release factor 2 directs the termination of translation in response to the peptide chain termination codons UGA and UAA. The sequence is that of Peptide chain release factor 2 (prfB) from Chlamydia muridarum (strain MoPn / Nigg).